The chain runs to 277 residues: Large ribosomal subunit protein uL2 (277 aa).

A disordered region spans residues 222–258; that stretch reads GSVMNPCDHPHGGGEGRSPIGRPSPVTPWGKPALGYK.

It belongs to the universal ribosomal protein uL2 family. As to quaternary structure, part of the 50S ribosomal subunit. Forms a bridge to the 30S subunit in the 70S ribosome.

Its function is as follows. One of the primary rRNA binding proteins. Required for association of the 30S and 50S subunits to form the 70S ribosome, for tRNA binding and peptide bond formation. It has been suggested to have peptidyltransferase activity; this is somewhat controversial. Makes several contacts with the 16S rRNA in the 70S ribosome. The polypeptide is Large ribosomal subunit protein uL2 (Clostridium perfringens (strain 13 / Type A)).